The following is an 809-amino-acid chain: Phospholipase D alpha 1 (809 aa).

The 125-residue stretch at 1 to 125 (MAQILLHGTL…LDGHEIDKWV (125 aa)) folds into the C2 domain. A Ca(2+)-binding site is contributed by Asp186. Residues 326-365 (TMFTHHQKIVVVDSALPGGGGSDKRRIVSFVGGLDLCDGR) enclose the PLD phosphodiesterase 1 domain. Active-site residues include His331, Lys333, and Asp338. His331 contacts a 1,2-diacyl-sn-glycero-3-phosphate. His371 and His405 together coordinate Ca(2+). Residues Gln521 and His660 each coordinate a 1,2-diacyl-sn-glycero-3-phosphate. In terms of domain architecture, PLD phosphodiesterase 2 spans 655-682 (FMIYVHTKMMIVDDEYIIIGSANINQRS). Active-site residues include His660, Lys662, and Asp667. Glu721 contacts Ca(2+).

Belongs to the phospholipase D family. C2-PLD subfamily. The cofactor is Ca(2+).

It catalyses the reaction a 1,2-diacyl-sn-glycero-3-phosphocholine + H2O = a 1,2-diacyl-sn-glycero-3-phosphate + choline + H(+). Its function is as follows. Hydrolyzes glycerol-phospholipids at the terminal phosphodiesteric bond. Plays an important role in various cellular processes. The polypeptide is Phospholipase D alpha 1 (PLD1) (Vigna unguiculata (Cowpea)).